The sequence spans 432 residues: Neuropeptide FF receptor 1 (432 aa).

The Extracellular segment spans residues 1-43 (MEAEPSQPPNGSWPLGQNGSDVETSMATSLTFSSYYQHSSPVA). 2 N-linked (GlcNAc...) asparagine glycosylation sites follow: N10 and N18. The chain crosses the membrane as a helical span at residues 44–64 (AMFIAAYVLIFLLCMVGNTLV). Residues 65 to 80 (CFIVLKNRHMRTVTNM) are Cytoplasmic-facing. The chain crosses the membrane as a helical span at residues 81–101 (FILNLAVSDLLVGIFCMPTTL). Residues 102 to 117 (VDNLITGWPFDNATCK) are Extracellular-facing. N113 carries N-linked (GlcNAc...) asparagine glycosylation. C116 and C203 are disulfide-bonded. The helical transmembrane segment at 118 to 138 (MSGLVQGMSVSASVFTLVAIA) threads the bilayer. Topologically, residues 139–158 (VERFRCIVHPFREKLTLRKA) are cytoplasmic. Residues 159–179 (LFTIAVIWALALLIMCPSAVT) form a helical membrane-spanning segment. Topologically, residues 180–214 (LTVTREEHHFMLDARNRSYPLYSCWEAWPEKGMRK) are extracellular. N195 is a glycosylation site (N-linked (GlcNAc...) asparagine). Residues 215–235 (VYTAVLFAHIYLVPLALIVVM) form a helical membrane-spanning segment. The Cytoplasmic portion of the chain corresponds to 236 to 273 (YVRIARKLCQAPGPARDTEEAVAEGGRTSRRRARVVHM). A helical transmembrane segment spans residues 274–294 (LVMVALFFTLSWLPLWVLLLL). Over 295–309 (IDYGELSELQLHLLS) the chain is Extracellular. A helical transmembrane segment spans residues 310–330 (VYAFPLAHWLAFFHSSANPII). At 331-432 (YGYFNENFRR…MPLTIPAWNI (102 aa)) the chain is on the cytoplasmic side. Residues 380–406 (PSDSGLPSESGPSSGVPGPGRLPLRNG) show a composition bias toward low complexity. Positions 380 to 422 (PSDSGLPSESGPSSGVPGPGRLPLRNGRVAHQDGPGEGPGCNH) are disordered.

The protein belongs to the G-protein coupled receptor 1 family. Expressed at high levels in the hypothalamus. Moderate levels found in the midbrain, thalamus, medulla oblongata, testis, eye, whole brain, cerebral cortex, striatum, hippocampus, cerebellum, optic nerve, placenta, spinal cord, pituitary gland and ovary.

Its subcellular location is the cell membrane. Functionally, receptor for NPAF (A-18-F-amide) and NPFF (F-8-F-amide) neuropeptides, also known as morphine-modulating peptides. Can also be activated by a variety of naturally occurring or synthetic FMRF-amide like ligands. This receptor mediates its action by association with G proteins that activate a phosphatidylinositol-calcium second messenger system. This Rattus norvegicus (Rat) protein is Neuropeptide FF receptor 1 (Npffr1).